The chain runs to 582 residues: Leucine-rich repeat protein SHOC-2 (582 aa).

Composition is skewed to basic and acidic residues over residues methionine 1–lysine 29 and lysine 36–serine 57. A disordered region spans residues methionine 1 to alanine 88. The RVxF motif; important for interaction with PP1c motif lies at glycine 63–phenylalanine 66. LRR repeat units lie at residues asparagine 101–leucine 122, glutamine 124–leucine 145, asparagine 147–lysine 169, lysine 170–leucine 191, serine 193–leucine 214, lysine 216–leucine 237, asparagine 239–cysteine 260, glutamine 262–leucine 283, serine 285–serine 307, alanine 308–serine 329, lysine 332–glutamine 353, threonine 356–arginine 377, valine 380–threonine 400, serine 403–leucine 424, serine 426–arginine 448, lysine 449–leucine 470, aspartate 472–threonine 494, asparagine 495–leucine 516, asparagine 518–cysteine 540, and lysine 542–glycine 563.

The protein belongs to the SHOC2 family. In terms of assembly, component of the SHOC2-MRAS-PP1c (SMP) complex consisting of SHOC2, GTP-bound M-Ras/MRAS and the catalytic subunit of protein phosphatase 1 (either PPP1CA, PPP1CB or PPP1CC). SHOC2 and PP1c preferably bind M-Ras/MRAS, but they also bind K-Ras/KRAS, N-Ras/NRAS and H-Ras/HRAS; these interactions are GTP-dependent and both SHOC2 and PP1c are required to form a stable complex. Interacts with PP1c in the absence of Ras GTPases. Interacts with M-Ras/MRAS and RAF1. Interacts with ERBIN; disrupts the interaction with RAF1 and Ras, preventing the activation of the Ras signaling pathway. Interacts with LZTR1.

It localises to the cytoplasm. Its subcellular location is the nucleus. Functionally, core component of the SHOC2-MRAS-PP1c (SMP) holophosphatase complex that regulates activation of the MAPK pathway. Acts as a scaffolding protein in the SMP complex. The SMP complex specifically dephosphorylates the inhibitory phosphorylation at 'Ser-259' of RAF1 kinase, 'Ser-365' of BRAF kinase and 'Ser-214' of ARAF kinase, stimulating their kinase activities. The SMP complex enhances the dephosphorylation activity and substrate specificity of PP1c. This is Leucine-rich repeat protein SHOC-2 (SHOC2) from Homo sapiens (Human).